The sequence spans 261 residues: Metallo-beta-lactamase fold-containing protein ST1585 (261 aa).

7 residues coordinate Zn(2+): H58, H60, D62, H63, H148, D165, and H207.

The protein belongs to the metallo-beta-lactamase superfamily. In terms of assembly, monomer.

This Sulfurisphaera tokodaii (strain DSM 16993 / JCM 10545 / NBRC 100140 / 7) (Sulfolobus tokodaii) protein is Metallo-beta-lactamase fold-containing protein ST1585.